A 322-amino-acid polypeptide reads, in one-letter code: Quinolinate synthase (322 aa).

Iminosuccinate-binding residues include H38 and S55. C100 contributes to the [4Fe-4S] cluster binding site. Residues 126–128 (YIN) and S143 each bind iminosuccinate. C186 is a [4Fe-4S] cluster binding site. Residues 212–214 (HPE) and T229 contribute to the iminosuccinate site. C279 is a binding site for [4Fe-4S] cluster.

This sequence belongs to the quinolinate synthase family. Type 2 subfamily. The cofactor is [4Fe-4S] cluster.

The protein resides in the cytoplasm. The enzyme catalyses iminosuccinate + dihydroxyacetone phosphate = quinolinate + phosphate + 2 H2O + H(+). The protein operates within cofactor biosynthesis; NAD(+) biosynthesis; quinolinate from iminoaspartate: step 1/1. Its function is as follows. Catalyzes the condensation of iminoaspartate with dihydroxyacetone phosphate to form quinolinate. This is Quinolinate synthase from Cyanothece sp. (strain PCC 7425 / ATCC 29141).